The primary structure comprises 387 residues: Zinc transporter 7 (387 aa).

Topologically, residues 1–37 (MLPLSIKDDEYKPAKFNLVVKLSGWFRSILADKTSRN) are cytoplasmic. Residues 38–58 (LFFFLCLNLSFAFVELLYGIW) form a helical membrane-spanning segment. Over 59–67 (SNSLGLISD) the chain is Lumenal. The chain crosses the membrane as a helical span at residues 68–88 (SFHMFFDCTALLAGLAASVIS). Residues 89 to 102 (RWRSNDSFSYGYVR) are Cytoplasmic-facing. The chain crosses the membrane as a helical span at residues 103–123 (AEVLAGFVNGLFLIFTAFFIF). At 124 to 140 (SEGVERALEPPDVHHDR) the chain is on the lumenal side. A helical transmembrane segment spans residues 141 to 161 (LLPVSIAGLLVNLVGIFVFQH). A his-rich loop region spans residues 161–232 (HGGHGHSHGG…HDDQHCHDDH (72 aa)). Over 162 to 247 (GGHGHSHGGD…KGSSKQILQG (86 aa)) the chain is Cytoplasmic. The disordered stretch occupies residues 167–237 (SHGGDDHGHS…CHDDHTLTPG (71 aa)). Positions 187 to 201 (GHSHGGHGHSHGGHG) are enriched in basic residues. Basic and acidic residues-rich tracts occupy residues 202-214 (HSHE…DHGH) and 221-233 (HSHD…DDHT). A helical transmembrane segment spans residues 248 to 268 (VFLHIVADTLGSVGVIISAIL). The Lumenal segment spans residues 269–273 (MQKYD). The helical transmembrane segment at 274-294 (LMIADPICSMLIALLIGVSVV) threads the bilayer. The Cytoplasmic portion of the chain corresponds to 295-387 (PLLRESIGIL…LYVQIEVAAM (93 aa)).

This sequence belongs to the cation diffusion facilitator (CDF) transporter (TC 2.A.4) family. SLC30A subfamily. In terms of assembly, homooligomer.

The protein localises to the golgi apparatus membrane. It is found in the cytoplasmic vesicle. Its subcellular location is the golgi apparatus. It localises to the trans-Golgi network. The protein resides in the sarcoplasmic reticulum. The protein localises to the mitochondrion. The catalysed reaction is Zn(2+)(in) = Zn(2+)(out). Its function is as follows. Zinc ion transporter mediating zinc entry from the cytosol into the lumen of organelles along the secretory pathway. By contributing to zinc ion homeostasis within the early secretory pathway, regulates the activation and folding of enzymes like alkaline phosphatases. The protein is Zinc transporter 7 (slc30a7) of Danio rerio (Zebrafish).